Here is a 628-residue protein sequence, read N- to C-terminus: tRNA uridine 5-carboxymethylaminomethyl modification enzyme MnmG (628 aa).

FAD contacts are provided by residues 11 to 16 (GAGHAG), valine 123, and serine 178. Residue 271–285 (GPRYCPSIETKIVTF) participates in NAD(+) binding. An FAD-binding site is contributed by glutamine 368.

Belongs to the MnmG family. In terms of assembly, homodimer. Heterotetramer of two MnmE and two MnmG subunits. It depends on FAD as a cofactor.

It localises to the cytoplasm. Its function is as follows. NAD-binding protein involved in the addition of a carboxymethylaminomethyl (cmnm) group at the wobble position (U34) of certain tRNAs, forming tRNA-cmnm(5)s(2)U34. This Bacteroides thetaiotaomicron (strain ATCC 29148 / DSM 2079 / JCM 5827 / CCUG 10774 / NCTC 10582 / VPI-5482 / E50) protein is tRNA uridine 5-carboxymethylaminomethyl modification enzyme MnmG.